A 483-amino-acid chain; its full sequence is MNKKIRVRYAPSPTGLLHIGNARTALFNYLFARHHGGDFIIRIEDTDRERHVEDGERSQLENLRWLGMDWDESPETHENYRQSERLPLYQKYIDQLLAEGKAYYSYKTPEELEADHAKQEAAGIPPHYINEYAGMSDDEKAAYIAERKAQNIEPVVRISVDEKAIYKWNDIVKGEIEFEGGNIGGDWVIQKRDGYPTYNFAVVVDDHDMQISHVIRGDDHIANTPKQLVVYNALGWEAPQFGHMTLIINSETGKKLSKRDTNTLQFIEDYRKKGYMSDAIFNFIALLGWNPGGEKEIFSCEELIELFDENRLSKSPAAFDQKKLDWMDNEYIKNADFAKVFELTKPFLVAANRFDERAKELVKLYQPQMKSADEIVELTELFYGDFPELTDEAREMLAAETTPLVLSTFRAKLAELPESDFTVENIFPLFKATQKETGVKGKMLWMPIRIAASGSMHGPELPETIALLGKEKVLAHLDAALNK.

Positions 11-21 match the 'HIGH' region motif; that stretch reads PSPTGLLHIGN. Positions 255-259 match the 'KMSKS' region motif; sequence KLSKR. Lys-258 contacts ATP.

The protein belongs to the class-I aminoacyl-tRNA synthetase family. Glutamate--tRNA ligase type 1 subfamily. As to quaternary structure, monomer.

The protein resides in the cytoplasm. The catalysed reaction is tRNA(Glu) + L-glutamate + ATP = L-glutamyl-tRNA(Glu) + AMP + diphosphate. Catalyzes the attachment of glutamate to tRNA(Glu) in a two-step reaction: glutamate is first activated by ATP to form Glu-AMP and then transferred to the acceptor end of tRNA(Glu). The chain is Glutamate--tRNA ligase from Lactococcus lactis subsp. cremoris (strain MG1363).